Consider the following 1266-residue polypeptide: MRRLPGILLLTGAALVVIAALLVSGLRIALPHLDAWRPEILNKIESATGMPVEASQLSASWQNFGPTLEAHDIRAELKDGGEFSVKRVTLALDVWQSLLHMRWQFRDLTFWQLRFRTNTPITSGGSDDSLEASHISDLFLRQFDHFDLRDSEVSFLTPSGQRAELAIPQLTWLNDPRRHRAEGLVSLSSLTGQHGVMQVRMDLRDDEGLLSNGRVWLQADDIDLKPWLGKWMQDNIALETAQFSLEGWMTIDKGDVTGGDVWLKQGGASWLGEKQTHTLSVDNLTAHITRENPGWQFSIPDTRITMDGKPWPSGALTLAWIPEQDVGGKDNKRSDELRIRASNLELAGLEGIRPLAAKLSPALGDVWRSTQPSGKINTLALDIPLQAADKTRFQASWSDLAWKQWKLLPGAEHFSGTLSGSVENGLLTASMKQAKMPYETVFRAPLEIADGQATISWLNNNKGFQLDGRNIDVKAKAVHARGGFRYLQPANDEPWLGILAGISTDDGSQAWRYFPENLMGKDLVDYLSGAIQGGEADNATLVYGGNPQLFPYKHNEGQFEVLVPLRNAKFAFQPDWPALTNLDIELDFINDGLWMKTDGVNLGGVRASNLTAVIPDYSKEKLLIDADIKGPGKAVGPYFDETPLKDSLGATLQELQLDGDVNARLHLDIPLNGELVTAKGEVTLRNNSLFIKPLDSTLKNLSGKFSFINSDLQSEPLTASWFNQPLNVDFSTKEGAKAYQVAVNLNGNWQPAKTGVLPEAVNEALSGSVAWDGKVGIDLPYHAGATYNIELNGDLKNVSSHLPSPLAKPAGEPLAVNVKVDGNLNSFELTGQAGADNHFNSRWLLGQKLTLDRAIWAADSKTLPPLPEQSGVELNMPPMNGAEWLALFQKGAAESVGGAASFPQHITLRTPMLSLGNQQWNNLSIVSQPTANGTLVEAQGREINATLAMRNNAPWLANIKYLYYNPSVAKTRGDSTPSSPFPTTERINFRGWPDAQIRCTECWFWGQKFGRIDSDITISGDTLTLTNGLIDTGFSRLTADGEWVNNPGNERTSLKGKLRGQKIDAAAEFFGVTTPIRQSSFNVDYDLHWRKAPWQPDEATLNGIIHTQLGKGEITEINTGHAGQLLRLLSVDALMRKLRFDFRDTFGEGFYFDSIRSTAWIKDGVMHTDDTLVDGLEADIAMKGSVNLVRRDLNMEAVVAPEISATVGVAAAFAVNPIVGAAVFAASKVLGPLWSKVSILRYHISGPLDDPQINEVLRQPRKEKAQ.

The Cytoplasmic portion of the chain corresponds to 1-5 (MRRLP). Residues 6-26 (GILLLTGAALVVIAALLVSGL) traverse the membrane as a helical segment. Over 27–1266 (RIALPHLDAW…LRQPRKEKAQ (1240 aa)) the chain is Periplasmic. Positions 94–103 (VWQSLLHMRW) are P-helix. A C-helix_2 region spans residues 1121–1144 (HAGQLLRLLSVDALMRKLRFDFRD). Residues 1203–1237 (ISATVGVAAAFAVNPIVGAAVFAASKVLGPLWSKV) are C-helix_1.

Its subcellular location is the cell inner membrane. In terms of biological role, involved in outer membrane lipid homeostasis. Likely transports phospholipids between the inner membrane and the outer membrane. It would provide a bridge-like structure that protects phospholipids as they travel across the periplasm. The phosphate-containing molecules are captured along the length of a hydrophobic groove that is continuous along all but the extreme N-terminus of the protein. It also appears to control, directly or indirectly, levels of cyclic enterobacterial common antigen (cyclic ECA), a soluble cyclic ECA molecule present in the periplasm. Functionally, tamB, YdbH and YhdP are redundant, but not equivalent, in performing an essential function for growth and maintaining lipid homeostasis in the outer membrane. The transport functions of TamB and YhdP could be differentiated according to the fatty acid saturation state of the phospholipids, with TamB transporting more unsaturated phospholipids and YhdP more saturated phospholipids. Any of these three proteins is sufficient for growth. In Escherichia coli (strain K12), this protein is Intermembrane phospholipid transporter YhdP (yhdP).